The chain runs to 337 residues: tRNA N6-adenosine threonylcarbamoyltransferase (337 aa).

Fe cation contacts are provided by His-111 and His-115. Substrate is bound by residues 134–138, Asp-167, Gly-180, and Asn-272; that span reads LVSGG. Asp-300 lines the Fe cation pocket.

Belongs to the KAE1 / TsaD family. Requires Fe(2+) as cofactor.

Its subcellular location is the cytoplasm. It catalyses the reaction L-threonylcarbamoyladenylate + adenosine(37) in tRNA = N(6)-L-threonylcarbamoyladenosine(37) in tRNA + AMP + H(+). Its function is as follows. Required for the formation of a threonylcarbamoyl group on adenosine at position 37 (t(6)A37) in tRNAs that read codons beginning with adenine. Is involved in the transfer of the threonylcarbamoyl moiety of threonylcarbamoyl-AMP (TC-AMP) to the N6 group of A37, together with TsaE and TsaB. TsaD likely plays a direct catalytic role in this reaction. This chain is tRNA N6-adenosine threonylcarbamoyltransferase, found in Salmonella typhi.